Reading from the N-terminus, the 160-residue chain is Leptin (160 aa).

The signal sequence occupies residues Met1–Cys17. Cys109 and Cys160 are disulfide-bonded.

Belongs to the leptin family.

It is found in the secreted. Functionally, may function as part of a signaling pathway that acts to regulate the size of the body fat depot. This chain is Leptin (lep), found in Tetraodon nigroviridis (Spotted green pufferfish).